The sequence spans 804 residues: Endoplasmin (804 aa).

The first 21 residues, 1-21, serve as a signal peptide directing secretion; sequence MRALWVLGLCCVLLTFGSVRA. The SRT pseudosubstrate motif motif lies at 42–44; that stretch reads SRT. The N-linked (GlcNAc...) asparagine glycan is linked to Asn-62. Ser-64 carries the phosphoserine modification. Asn-107 is a glycosylation site (N-linked (GlcNAc...) asparagine). 3 residues coordinate ATP: Asn-107, Asp-149, and Asn-162. Lys-168 bears the N6-(2-hydroxyisobutyryl)lysine mark. Ser-172 carries the phosphoserine modification. Residue Phe-199 participates in ATP binding. N-linked (GlcNAc...) asparagine glycosylation occurs at Asn-217. The interval 288–323 is disordered; that stretch reads TVEEPMEEEEAAKEEKEESDDEAAVEEEEEEKKPKT. Residues 289–317 show a composition bias toward acidic residues; the sequence is VEEPMEEEEAAKEEKEESDDEAAVEEEEE. 2 positions are modified to phosphoserine: Ser-306 and Ser-403. Lys-404 carries the N6-succinyllysine modification. Residue Asn-445 is glycosylated (N-linked (GlcNAc...) asparagine). Ser-447 carries the phosphoserine modification. N6-acetyllysine is present on Lys-479. Asn-481 and Asn-502 each carry an N-linked (GlcNAc...) asparagine glycan. Lys-633 bears the N6-succinyllysine mark. Residues 750–804 are disordered; sequence DPDAKVEEEPEEEPEETTEDTTEDTEQDDDEEMDAGADEEEQETSETSTAEKDEL. The segment covering 757–793 has biased composition (acidic residues); the sequence is EEPEEEPEETTEDTTEDTEQDDDEEMDAGADEEEQET. The short motif at 801 to 804 is the Prevents secretion from ER element; the sequence is KDEL.

The protein belongs to the heat shock protein 90 family. As to quaternary structure, homodimer; disulfide-linked. Component of an EIF2 complex at least composed of CELF1/CUGBP1, CALR, CALR3, EIF2S1, EIF2S2, HSP90B1 and HSPA5. Part of a large chaperone multiprotein complex comprising DNAJB11, HSP90B1, HSPA5, HYOU, PDIA2, PDIA4, PDIA6, PPIB, SDF2L1, UGGT1 and very small amounts of ERP29, but not, or at very low levels, CALR nor CANX. Interacts with AIMP1; regulates its retention in the endoplasmic reticulum. Hyperglycosylated form interacts with OS9; promoting its degradation by the endoplasmic reticulum associated degradation (ERAD). Interacts with CNPY3. This interaction is disrupted in the presence of ATP. Interacts with TLR4 and TLR9, but not with TLR3. Interacts with MZB1 in a calcium-dependent manner. Interacts with METTL23. Interacts with IL1B; the interaction facilitates cargo translocation into the ERGIC. Interacts with EIF2AK3. In terms of processing, phosphorylated by CK2. N-glycosylated cotranslationally at Asn-217 by STT3A-containing OST-A complex: this glycosylation is constitutive. In response to various stress, 5 additional facultative sites (Asn-62, Asn-107, Asn-445, Asn-481 and Asn-502) can be glycosylated post-translationally by STT3B-containing OST-B complex, leading to a hyperglycosylated form that is degraded by the ER-associated degradation (ERAD) pathway. In normal conditions, the OST-A complex together with CCDC134 prevent glycosylation at facultative sites during protein folding, thereby preventing hyperglycosylation. Mechanistically, nascent HSP90B1 is tethered during translation to a specialized CCDC134-containing translocon that forms a microenvironment for its folding, in which STT3A associates with the SRT pseudosubstrate motif, and prevents access to facultative glycosylation sites until folding is completed, rendering its facultative sites inaccessible to the OST-B complex.

It localises to the endoplasmic reticulum lumen. The protein resides in the sarcoplasmic reticulum lumen. Its subcellular location is the melanosome. It catalyses the reaction ATP + H2O = ADP + phosphate + H(+). In terms of biological role, ATP-dependent chaperone involved in the processing of proteins in the endoplasmic reticulum, regulating their transport. Together with MESD, acts as a modulator of the Wnt pathway by promoting the folding of LRP6, a coreceptor of the canonical Wnt pathway. When associated with CNPY3, required for proper folding of Toll-like receptors. Promotes folding and trafficking of TLR4 to the cell surface. May participate in the unfolding of cytosolic leaderless cargos (lacking the secretion signal sequence) such as the interleukin 1/IL-1 to facilitate their translocation into the ERGIC (endoplasmic reticulum-Golgi intermediate compartment) and secretion; the translocation process is mediated by the cargo receptor TMED10. This Sus scrofa (Pig) protein is Endoplasmin (HSP90B1).